The chain runs to 264 residues: uncharacterized protein (264 aa).

2 disordered regions span residues 1–52 (MPRS…AVPG) and 123–207 (GGRW…PWTR). Residues 29–40 (AAHPTTSPTAAS) show a composition bias toward low complexity. Residues 144-154 (HFQSSGAQQES) show a composition bias toward polar residues. The span at 188-197 (ARKSACKCPR) shows a compositional bias: basic residues.

This is an uncharacterized protein from Homo sapiens (Human).